The sequence spans 119 residues: Phytosulfokines 2 (119 aa).

A signal peptide spans 1-34; the sequence is MSTTRGVSSSSAAAALALLLLFALCFFSFHFAAA. The propeptide occupies 35–109; sequence ARAVPRDEHQ…RRLLSDAHLD (75 aa). Sulfotyrosine is present on residues tyrosine 110 and tyrosine 112. Positions 115–119 are excised as a propeptide; the sequence is HKNKP.

The protein belongs to the phytosulfokine family. In terms of processing, sulfation is important for activity and for the binding to a putative membrane receptor. Post-translationally, PSK-alpha is produced by endopeptidase digestion. PSK-beta is produced from PSK-alpha by exopeptidase digestion.

Its subcellular location is the secreted. Functionally, promotes plant cell differentiation, organogenesis and somatic embryogenesis as well as cell proliferation. This is Phytosulfokines 2 (PSK2) from Oryza sativa subsp. japonica (Rice).